The primary structure comprises 330 residues: Anthranilate phosphoribosyltransferase (330 aa).

5-phospho-alpha-D-ribose 1-diphosphate contacts are provided by residues Gly77, 80 to 81 (GD), Thr85, 87 to 90 (NIST), 105 to 113 (KHGNKAVSS), and Ser117. Position 77 (Gly77) interacts with anthranilate. Ser89 contributes to the Mg(2+) binding site. Asn108 lines the anthranilate pocket. Residue Arg163 participates in anthranilate binding. Mg(2+) is bound by residues Asp222 and Glu223.

It belongs to the anthranilate phosphoribosyltransferase family. Homodimer. Mg(2+) is required as a cofactor.

The enzyme catalyses N-(5-phospho-beta-D-ribosyl)anthranilate + diphosphate = 5-phospho-alpha-D-ribose 1-diphosphate + anthranilate. It functions in the pathway amino-acid biosynthesis; L-tryptophan biosynthesis; L-tryptophan from chorismate: step 2/5. Its function is as follows. Catalyzes the transfer of the phosphoribosyl group of 5-phosphorylribose-1-pyrophosphate (PRPP) to anthranilate to yield N-(5'-phosphoribosyl)-anthranilate (PRA). The sequence is that of Anthranilate phosphoribosyltransferase from Pelagibacter ubique (strain HTCC1062).